Here is a 376-residue protein sequence, read N- to C-terminus: Putative glutamate--cysteine ligase 2 (376 aa).

The protein belongs to the glutamate--cysteine ligase type 2 family. YbdK subfamily.

The catalysed reaction is L-cysteine + L-glutamate + ATP = gamma-L-glutamyl-L-cysteine + ADP + phosphate + H(+). ATP-dependent carboxylate-amine ligase which exhibits weak glutamate--cysteine ligase activity. In Paracoccus denitrificans (strain Pd 1222), this protein is Putative glutamate--cysteine ligase 2.